The primary structure comprises 208 residues: Uridine kinase (208 aa).

11-18 contacts ATP; sequence GGTGSGKS.

Belongs to the uridine kinase family.

It is found in the cytoplasm. The catalysed reaction is uridine + ATP = UMP + ADP + H(+). It carries out the reaction cytidine + ATP = CMP + ADP + H(+). The protein operates within pyrimidine metabolism; CTP biosynthesis via salvage pathway; CTP from cytidine: step 1/3. It participates in pyrimidine metabolism; UMP biosynthesis via salvage pathway; UMP from uridine: step 1/1. The polypeptide is Uridine kinase (Alkaliphilus metalliredigens (strain QYMF)).